The sequence spans 495 residues: DUF21 domain-containing protein At4g14230 (495 aa).

Over 1–42 the chain is Extracellular; sequence MHPINAVVAARMLAGISQSNALQSEAIPFGSLEWITYAGISC. A CNNM transmembrane domain is found at 30-212; that stretch reads GSLEWITYAG…GKGGELTHDE (183 aa). The chain crosses the membrane as a helical span at residues 43–63; sequence FLVLFAGIMSGLTLGLMSLGL. Topologically, residues 64–92 are cytoplasmic; it reads VELEILQRSGTPKEKKQSAAIFPVVQKQH. A helical transmembrane segment spans residues 93 to 113; that stretch reads QLLVTLLLFNALAMEGLPIYL. Over 114–120 the chain is Extracellular; sequence DKIFNEY. Residues 121–141 traverse the membrane as a helical segment; it reads VAIILSVTFVLFVGEVIPQAI. Topologically, residues 142-146 are cytoplasmic; it reads CTRYG. A helical transmembrane segment spans residues 147–167; it reads LAVGANLVWLVRILMVLSYPI. The Extracellular segment spans residues 168 to 495; it reads SFPIAKMLDW…TMTGPPQGNN (328 aa). 3 CBS domains span residues 231–291, 296–356, and 357–426; these read MTPI…TGTL, GIRR…NNSE, and LTAP…IVDE. The segment at 330 to 354 is disordered; the sequence is KGKSKGHPSTLHEENSGESNVSSNN. Asn-349 is a glycosylation site (N-linked (GlcNAc...) asparagine). At Ser-352 the chain carries Phosphoserine. Asn-353 is a glycosylation site (N-linked (GlcNAc...) asparagine). Positions 455-495 are disordered; it reads SGRRLLGPKGSGGPKTPKASSTPKPDDKLMGTMTGPPQGNN. Residues 456-477 show a composition bias toward low complexity; sequence GRRLLGPKGSGGPKTPKASSTP.

It is found in the membrane. The sequence is that of DUF21 domain-containing protein At4g14230 (CBSDUF2) from Arabidopsis thaliana (Mouse-ear cress).